The primary structure comprises 257 residues: Zinc import ATP-binding protein ZnuC (257 aa).

The ABC transporter domain maps to 6–221; the sequence is IRLDQVGVTF…PAFVELFGKT (216 aa). 38–45 is an ATP binding site; it reads GPNGAGKT.

It belongs to the ABC transporter superfamily. Zinc importer (TC 3.A.1.15.5) family. The complex is composed of two ATP-binding proteins (ZnuC), two transmembrane proteins (ZnuB) and a solute-binding protein (ZnuA).

The protein resides in the cell inner membrane. The catalysed reaction is Zn(2+)(out) + ATP(in) + H2O(in) = Zn(2+)(in) + ADP(in) + phosphate(in) + H(+)(in). Part of the ABC transporter complex ZnuABC involved in zinc import. Responsible for energy coupling to the transport system. This Pseudomonas putida (strain ATCC 47054 / DSM 6125 / CFBP 8728 / NCIMB 11950 / KT2440) protein is Zinc import ATP-binding protein ZnuC.